A 166-amino-acid chain; its full sequence is Phospholipase A2 inhibitor clone 11 (166 aa).

The N-terminal stretch at 1-19 (MRLILLSGLLLLGIFLANG) is a signal peptide. The C-type lectin domain occupies 46–161 (LKGSFLIVHK…CDDNLLVVCE (116 aa)). Cystine bridges form between Cys-83–Cys-160 and Cys-138–Cys-152. Asn-122 is a glycosylation site (N-linked (GlcNAc...) asparagine).

The protein belongs to the alpha-type phospholipase A2 inhibitor family. Homotrimer; non-covalently linked. In terms of tissue distribution, expressed by the liver.

Its subcellular location is the secreted. Its function is as follows. This phospholipase A2 inhibitor binds directly phospholipase A2 in the presence or absence of calcium. The sequence is that of Phospholipase A2 inhibitor clone 11 from Bothrops neuwiedi (Neuwied's lancehead).